The primary structure comprises 136 residues: FK506-binding protein 2 (136 aa).

Residues 1–17 form the signal peptide; sequence MLSQIWILFTFMVCVIA. The region spanning 45-134 is the PPIase FKBP-type domain; that stretch reads GDMVSVHYTG…DFDVELVDIA (90 aa).

The protein belongs to the FKBP-type PPIase family. FKBP2 subfamily.

It localises to the endoplasmic reticulum. The enzyme catalyses [protein]-peptidylproline (omega=180) = [protein]-peptidylproline (omega=0). Its activity is regulated as follows. Inhibited by both FK506 and rapamycin. Functionally, PPIases accelerate the folding of proteins. It catalyzes the cis-trans isomerization of proline imidic peptide bonds in oligopeptides. This Candida glabrata (strain ATCC 2001 / BCRC 20586 / JCM 3761 / NBRC 0622 / NRRL Y-65 / CBS 138) (Yeast) protein is FK506-binding protein 2 (FPR2).